Reading from the N-terminus, the 352-residue chain is Coproporphyrin III ferrochelatase (352 aa).

Serine 52 and tyrosine 121 together coordinate Fe-coproporphyrin III. Fe(2+) contacts are provided by histidine 178 and glutamate 267.

The protein belongs to the ferrochelatase family.

Its subcellular location is the cytoplasm. The enzyme catalyses Fe-coproporphyrin III + 2 H(+) = coproporphyrin III + Fe(2+). The protein operates within porphyrin-containing compound metabolism; protoheme biosynthesis. In terms of biological role, involved in coproporphyrin-dependent heme b biosynthesis. Catalyzes the insertion of ferrous iron into coproporphyrin III to form Fe-coproporphyrin III. The protein is Coproporphyrin III ferrochelatase of Propionibacterium freudenreichii subsp. freudenreichii.